Consider the following 112-residue polypeptide: Macrodomain Ori protein (112 aa).

The interval 91–112 (FHTLSGGKPQVEGAEDYTDSDD) is disordered. Over residues 103 to 112 (GAEDYTDSDD) the composition is skewed to acidic residues.

The protein belongs to the MaoP family.

Involved in the organization of the Ori region of the chromosome into a macrodomain (MD). It constrains DNA mobility in the Ori macrodomain and limits long-distance DNA interactions with other chromosomal regions. This is Macrodomain Ori protein from Escherichia coli O157:H7.